A 487-amino-acid polypeptide reads, in one-letter code: L-tartrate/succinate antiporter (487 aa).

The next 14 helical transmembrane spans lie at 10 to 30, 33 to 53, 54 to 74, 93 to 113, 137 to 157, 189 to 209, 230 to 250, 292 to 312, 313 to 333, 340 to 360, 370 to 390, 393 to 413, 418 to 438, and 465 to 485; these read YLAP…AGLE, TWLY…EPVP, GAVV…WLLF, WAVS…FMFG, TLFL…VTPS, IGSY…AIFL, LSWG…VLLV, LMVG…AAMV, GYSV…DIVS, VFFW…TGFI, SLSG…FYLL, FFAS…AAAL, IPLP…SILT, and IFGL…MPVV.

The protein belongs to the SLC13A/DASS transporter (TC 2.A.47) family. DIT1 subfamily.

The protein localises to the cell inner membrane. It catalyses the reaction (2R,3R)-tartrate(out) + succinate(in) = (2R,3R)-tartrate(in) + succinate(out). Its function is as follows. Catalyzes the uptake of tartrate in exchange for intracellular succinate. Essential for anaerobic L-tartrate fermentation. The protein is L-tartrate/succinate antiporter (ttdT) of Shigella dysenteriae serotype 1 (strain Sd197).